Here is a 325-residue protein sequence, read N- to C-terminus: Replication factor C small subunit (325 aa).

44-51 (GPPGTGKT) lines the ATP pocket.

It belongs to the activator 1 small subunits family. RfcS subfamily. In terms of assembly, heteromultimer composed of small subunits (RfcS) and large subunits (RfcL).

In terms of biological role, part of the RFC clamp loader complex which loads the PCNA sliding clamp onto DNA. This is Replication factor C small subunit from Thermofilum pendens (strain DSM 2475 / Hrk 5).